Reading from the N-terminus, the 457-residue chain is UDP-N-acetylmuramate--L-alanyl-gamma-D-glutamyl-meso-2,6-diaminoheptandioate ligase (457 aa).

110 to 116 is a binding site for ATP; the sequence is GTHGKTT.

The protein belongs to the MurCDEF family. Mpl subfamily. It depends on Mg(2+) as a cofactor.

It localises to the secreted. The enzyme catalyses UDP-N-acetyl-alpha-D-muramate + L-alanyl-gamma-D-glutamyl-meso-2,6-diaminopimelate + ATP = UDP-N-acetyl-alpha-D-muramoyl-L-alanyl-gamma-D-glutamyl-meso-2,6-diaminopimelate + ADP + phosphate + H(+). It participates in cell wall biogenesis; peptidoglycan recycling. Functionally, reutilizes the intact tripeptide L-alanyl-gamma-D-glutamyl-meso-diaminopimelate by linking it to UDP-N-acetylmuramate. The enzyme can also use the tetrapeptide L-alanyl-gamma-D-glutamyl-meso-2,6-diaminoheptanedioyl-D-alanine or the pentapeptide L-alanyl-gamma-D-glutamyl-meso-2,6-diaminoheptandioyl-D-alanyl-D-alanine in vivo and in vitro. This Escherichia coli (strain K12) protein is UDP-N-acetylmuramate--L-alanyl-gamma-D-glutamyl-meso-2,6-diaminoheptandioate ligase.